Here is a 423-residue protein sequence, read N- to C-terminus: Myb-like protein G (423 aa).

An HTH myb-type domain is found at 36 to 90 (TISKQRENWTDEEHQKFLEALTLFDRDWKKIESFVGSKTVIQIRSHAQKYFIKVQ). A DNA-binding region (H-T-H motif) is located at residues 63-86 (WKKIESFVGSKTVIQIRSHAQKYF). Disordered stretches follow at residues 93-116 (NTGERIPPPRPKRKSIQPYPQKQK), 177-205 (QQAVTTAQSSQRNGGLPPNPSSNNGGTTL), and 284-372 (ISPR…LGNY). Positions 177 to 202 (QQAVTTAQSSQRNGGLPPNPSSNNGG) are enriched in low complexity. Polar residues predominate over residues 286 to 295 (PRNSTGNINV). The segment covering 302–354 (NNSNNNNNNNNNNNNNNNNNNNNNNNNNNNNNNNNNNNNNNNNNNNNNNNNNN) has biased composition (low complexity). Polar residues predominate over residues 361–372 (QNHSNMVNLGNY).

It is found in the nucleus. This chain is Myb-like protein G (mybG), found in Dictyostelium discoideum (Social amoeba).